The sequence spans 230 residues: Flavin-dependent thymidylate synthase (230 aa).

The ThyX domain maps to 1–217; that stretch reads MEIKVLEKGF…PVTYEAFLNF (217 aa). Residues Ser-55, 78 to 80, and Glu-86 each bind FAD; that span reads RHR. DUMP-binding positions include 75–78, 86–90, and Arg-156; these read QLVR and ERSGR. The ThyX motif motif lies at 78 to 88; that stretch reads RHRIASINERS. FAD contacts are provided by residues 172–174 and Asn-178; that span reads NAR. Position 183 (Arg-183) interacts with dUMP. The Involved in ionization of N3 of dUMP, leading to its activation role is filled by Arg-183.

This sequence belongs to the thymidylate synthase ThyX family. Homotetramer. The cofactor is FAD.

It carries out the reaction dUMP + (6R)-5,10-methylene-5,6,7,8-tetrahydrofolate + NADPH + H(+) = dTMP + (6S)-5,6,7,8-tetrahydrofolate + NADP(+). It functions in the pathway pyrimidine metabolism; dTTP biosynthesis. Functionally, catalyzes the reductive methylation of 2'-deoxyuridine-5'-monophosphate (dUMP) to 2'-deoxythymidine-5'-monophosphate (dTMP) while utilizing 5,10-methylenetetrahydrofolate (mTHF) as the methyl donor, and NADPH and FADH(2) as the reductant. The chain is Flavin-dependent thymidylate synthase from Kosmotoga olearia (strain ATCC BAA-1733 / DSM 21960 / TBF 19.5.1).